The sequence spans 158 residues: GTP-dependent dephospho-CoA kinase (158 aa).

GTP contacts are provided by D35, V36, D54, K56, E109, and D132.

It belongs to the GTP-dependent DPCK family.

It carries out the reaction 3'-dephospho-CoA + GTP = GDP + CoA + H(+). It functions in the pathway cofactor biosynthesis; coenzyme A biosynthesis. Functionally, catalyzes the GTP-dependent phosphorylation of the 3'-hydroxyl group of dephosphocoenzyme A to form coenzyme A (CoA). The chain is GTP-dependent dephospho-CoA kinase from Methanococcus maripaludis (strain DSM 14266 / JCM 13030 / NBRC 101832 / S2 / LL).